The sequence spans 76 residues: Acyl carrier protein (76 aa).

The Carrier domain occupies 2–76 (SNIEERVIKV…QSAIDFVKSR (75 aa)). Serine 37 bears the O-(pantetheine 4'-phosphoryl)serine mark.

This sequence belongs to the acyl carrier protein (ACP) family. Post-translationally, 4'-phosphopantetheine is transferred from CoA to a specific serine of apo-ACP by AcpS. This modification is essential for activity because fatty acids are bound in thioester linkage to the sulfhydryl of the prosthetic group.

Its subcellular location is the cytoplasm. It participates in lipid metabolism; fatty acid biosynthesis. In terms of biological role, carrier of the growing fatty acid chain in fatty acid biosynthesis. The polypeptide is Acyl carrier protein (Dichelobacter nodosus (strain VCS1703A)).